The following is a 440-amino-acid chain: Nuclear fusion protein BIK1 (440 aa).

The region spanning 26 to 69 (GPVDTKAGMFAGVDLLANIGKNDGSFMGKKYFQTEYPQSGLFIQ) is the CAP-Gly domain. A phosphoserine mark is found at Ser-95 and Ser-110. A disordered region spans residues 108-157 (QFSPMDDPKSPTPMRSFRITSRHSGNQQSMDQEASDHHQQQEFGYDNRED). A compositionally biased stretch (polar residues) spans 125–139 (RITSRHSGNQQSMDQ). The span at 141 to 157 (ASDHHQQQEFGYDNRED) shows a compositional bias: basic and acidic residues. The stretch at 190-397 (NSSEVTIELR…AQAQTAVESL (208 aa)) forms a coiled coil. The CCHC-box motif lies at 416 to 429 (CEHCDTMGHNTAEC).

The protein resides in the cytoplasm. The protein localises to the cytoskeleton. It is found in the microtubule organizing center. Its subcellular location is the spindle pole body. It localises to the spindle. Required for nuclear fusion, chromosome disjunction, and nuclear segregation during mitosis. Probably required for the formation or stabilization of microtubules during mitosis and for spindle pole body fusion during conjugation. This Saccharomyces cerevisiae (strain ATCC 204508 / S288c) (Baker's yeast) protein is Nuclear fusion protein BIK1 (BIK1).